The following is a 156-amino-acid chain: Ribosome maturation factor RimP (156 aa).

This sequence belongs to the RimP family.

The protein localises to the cytoplasm. Functionally, required for maturation of 30S ribosomal subunits. In Treponema pallidum (strain Nichols), this protein is Ribosome maturation factor RimP.